The following is a 202-amino-acid chain: Pectinesterase inhibitor 11 (202 aa).

Positions 1–21 (MAKQIFYTLFLFLLSTAILTA) are cleaved as a signal peptide. Cys-43 and Cys-52 form a disulfide bridge. The N-linked (GlcNAc...) asparagine glycan is linked to Asn-76. An intrachain disulfide couples Cys-109 to Cys-160.

Belongs to the PMEI family.

It localises to the secreted. The protein localises to the extracellular space. The protein resides in the apoplast. Pectin methylesterase (PME) inhibitor involved in the maintenance of cell wall integrity in response to necrotrophic pathogens. Modulates PME activity and pectin methylesterification during infection by Botrytis cinerea and contributes to resistance against the pathogen. This chain is Pectinesterase inhibitor 11, found in Arabidopsis thaliana (Mouse-ear cress).